We begin with the raw amino-acid sequence, 276 residues long: Outer membrane lipoprotein 2 (276 aa).

The N-terminal stretch at 1–19 (MNFKKLLGVALVSALALTA) is a signal peptide. Cys-20 is lipidated: N-palmitoyl cysteine. The S-diacylglycerol cysteine moiety is linked to residue Cys-20.

This sequence belongs to the NlpA lipoprotein family.

The protein resides in the cell outer membrane. The chain is Outer membrane lipoprotein 2 (plpB) from Mannheimia haemolytica (Pasteurella haemolytica).